Consider the following 769-residue polypeptide: Ligand-dependent nuclear receptor-interacting factor 1 (769 aa).

Glycyl lysine isopeptide (Lys-Gly) (interchain with G-Cter in SUMO2) cross-links involve residues Lys259 and Lys279. The segment covering 378 to 387 (QIDQQNSVSP) has biased composition (polar residues). Positions 378 to 400 (QIDQQNSVSPDTPVRKDTLQTVS) are disordered. Phosphoserine is present on residues Ser402, Ser430, and Ser436. A Glycyl lysine isopeptide (Lys-Gly) (interchain with G-Cter in SUMO2) cross-link involves residue Lys446. Ser502 is modified (phosphoserine). The tract at residues 528–562 (DQEPKIHNEMASTSDKGAQGRNDKKDSQGRSNKAL) is disordered. The PxVxL motif motif lies at 580–584 (LRVCL). Ser599 carries the post-translational modification Phosphoserine. Lys605 is covalently cross-linked (Glycyl lysine isopeptide (Lys-Gly) (interchain with G-Cter in SUMO2)). 2 consecutive short sequence motifs (nuclear localization signal) follow at residues 628–631 (KKRK) and 642–645 (KKRK). Lys702 participates in a covalent cross-link: Glycyl lysine isopeptide (Lys-Gly) (interchain with G-Cter in SUMO2). Thr732 is subject to Phosphothreonine. Positions 740–769 (IRDEKIRRLKQVLREKEAALEEMRKKMHQK) form a coiled coil.

Belongs to the LRIF1 family. Interacts with RARA. Interacts with SMCHD1; leading to recruitment to inactivated chromosome X in females. Interacts (via PxVxL motif) with HP1 (CBX1/HP1-beta, CBX3/HP1-gamma and CBX5/HP1-alpha). Widely expressed, with the highest expression levels in heart, liver and placenta.

It is found in the chromosome. Its subcellular location is the nucleus matrix. In terms of biological role, together with SMCHD1, involved in chromosome X inactivation in females by promoting the compaction of heterochromatin. Also able to repress the ligand-induced transcriptional activity of retinoic acid receptor alpha (RARA), possibly through direct recruitment of histone deacetylases. Also required for silencing of the DUX4 locus in somatic cells. This is Ligand-dependent nuclear receptor-interacting factor 1 from Homo sapiens (Human).